The sequence spans 207 residues: High frequency lysogenization protein HflD homolog (207 aa).

It belongs to the HflD family.

It is found in the cytoplasm. It localises to the cell inner membrane. This is High frequency lysogenization protein HflD homolog from Teredinibacter turnerae (strain ATCC 39867 / T7901).